A 171-amino-acid chain; its full sequence is 6,7-dimethyl-8-ribityllumazine synthase (171 aa).

5-amino-6-(D-ribitylamino)uracil is bound by residues Phe24, 58-60 (ALE), and 82-84 (AVI). Residue 87–88 (ET) participates in (2S)-2-hydroxy-3-oxobutyl phosphate binding. His90 functions as the Proton donor in the catalytic mechanism. Asn115 provides a ligand contact to 5-amino-6-(D-ribitylamino)uracil. (2S)-2-hydroxy-3-oxobutyl phosphate is bound at residue Arg129. The disordered stretch occupies residues 150–171 (ALDQLGDDEDEEEDEDDEEERA). Acidic residues predominate over residues 154–171 (LGDDEDEEEDEDDEEERA).

It belongs to the DMRL synthase family.

It catalyses the reaction (2S)-2-hydroxy-3-oxobutyl phosphate + 5-amino-6-(D-ribitylamino)uracil = 6,7-dimethyl-8-(1-D-ribityl)lumazine + phosphate + 2 H2O + H(+). Its pathway is cofactor biosynthesis; riboflavin biosynthesis; riboflavin from 2-hydroxy-3-oxobutyl phosphate and 5-amino-6-(D-ribitylamino)uracil: step 1/2. In terms of biological role, catalyzes the formation of 6,7-dimethyl-8-ribityllumazine by condensation of 5-amino-6-(D-ribitylamino)uracil with 3,4-dihydroxy-2-butanone 4-phosphate. This is the penultimate step in the biosynthesis of riboflavin. In Burkholderia cenocepacia (strain HI2424), this protein is 6,7-dimethyl-8-ribityllumazine synthase.